We begin with the raw amino-acid sequence, 414 residues long: Glycogen synthase (414 aa).

It belongs to the glycosyltransferase group 1 family.

It catalyses the reaction [(1-&gt;4)-alpha-D-glucosyl](n) + UDP-alpha-D-glucose = [(1-&gt;4)-alpha-D-glucosyl](n+1) + UDP + H(+). The protein operates within glycan biosynthesis; glycogen biosynthesis. Glucosyltransferase that uses UDP-glucose as the sugar donor to elongate alpha-(1-&gt;4)-glucans. Is involved in the biosynthesis of both 6-O-methylglucosyl lipopolysaccharides (MGLP) and glycogen. May also use ADP-glucose as substrate. This chain is Glycogen synthase, found in Mycobacterium tuberculosis (strain CDC 1551 / Oshkosh).